Reading from the N-terminus, the 602-residue chain is MTDISVSKIRNFCIIAHIDHGKSTLADRLLQDTGTVQQRDMQEQFLDSMDLERERGITIKLQAARMKYKADDSQEYVLNLIDTPGHVDFSYEVSRSLQACEGALLVVDASQGVEAQTLANVYLALENNLEIIPVLNKVDLPGADAEKIKQEIEEIIGLDTSNAINCSAKTGVGIKDILEAIVRRVPPPQDEIKLPTKALIFDSYYDPYRGVIVYFRVISGSLNKREKILLMASKKNYELDEIGIMAPDQQQVDELHAGEVGYLAASIKSVADARVGDTITLLNSPANEPLPGYKTANPMVFCGLFPTDADQFPDLRVSLEKLQLSDAALKYEPETSSAMGFGFRCGFLGLLHMEIVQERLEREYDLDLIVTAPSVIYKVNLNQQENIFIDNPSTIPDPQLRESIEEPYVKMEIYAPNEFNGTLMGLCQERRGVFIDMKYITTDRVTLIYEIPLAEVVTDFFDQMKSRTQGYASMEYHLIGYRKNDLVRLDVLINSERADPLTSIVHKDKAYGIGRSLVEKLKELIPKQQFKIPIQASIGSRIIASESISALRKDVLSKCYGGDISRKKKLLKKQAKGKKRMKAMGKVEVPQEAFMAVLKLNQ.

The 183-residue stretch at Ser7 to Gln189 folds into the tr-type G domain. Residues Asp19 to Thr24 and Asn136 to Asp139 each bind GTP.

The protein belongs to the TRAFAC class translation factor GTPase superfamily. Classic translation factor GTPase family. LepA subfamily.

Its subcellular location is the cell inner membrane. The catalysed reaction is GTP + H2O = GDP + phosphate + H(+). Required for accurate and efficient protein synthesis under certain stress conditions. May act as a fidelity factor of the translation reaction, by catalyzing a one-codon backward translocation of tRNAs on improperly translocated ribosomes. Back-translocation proceeds from a post-translocation (POST) complex to a pre-translocation (PRE) complex, thus giving elongation factor G a second chance to translocate the tRNAs correctly. Binds to ribosomes in a GTP-dependent manner. The protein is Elongation factor 4 of Prochlorococcus marinus (strain MIT 9215).